The chain runs to 239 residues: RNA polymerase sigma factor FliA (239 aa).

The interval 16–88 is sigma-70 factor domain-2; the sequence is LWQRYVPLVR…MLDELRSRDW (73 aa). An Interaction with polymerase core subunit RpoC motif is present at residues 43–46; the sequence is DLLQ. Positions 96-166 are sigma-70 factor domain-3; sequence NAREVAQAMG…IELVTEEHQQ (71 aa). Residues 185-233 form a sigma-70 factor domain-4 region; the sequence is AIESLPEREQLVLTLYYQEELNLKEIGAVLEVGESRVSQLHSQAIKRLR. The segment at residues 207-226 is a DNA-binding region (H-T-H motif); it reads LKEIGAVLEVGESRVSQLHS.

It belongs to the sigma-70 factor family. FliA subfamily.

It localises to the cytoplasm. Its function is as follows. Sigma factors are initiation factors that promote the attachment of RNA polymerase to specific initiation sites and are then released. This sigma factor controls the expression of flagella-related genes. The protein is RNA polymerase sigma factor FliA of Salmonella typhi.